The primary structure comprises 563 residues: Solute carrier family 22 member 1 (563 aa).

Residues 1 to 21 (MLTVDDVLEQVGEFGWFQKQT) are Cytoplasmic-facing. Residues 22-42 (FLILCLLSAAFAPIYVGIVFL) traverse the membrane as a helical segment. The Extracellular portion of the chain corresponds to 43 to 144 (AFTPDHRCRS…LVCDDSWKVD (102 aa)). The N-linked (GlcNAc...) asparagine glycan is linked to Asn71. Residues 145–165 (LFQSCVNLGFFLGSLGVGYIA) form a helical membrane-spanning segment. The Cytoplasmic segment spans residues 166–171 (DRFGRK). A helical transmembrane segment spans residues 172 to 192 (VCLLATTLTCASLGVLTAVAP). The Extracellular portion of the chain corresponds to 193–196 (DYTS). The chain crosses the membrane as a helical span at residues 197 to 219 (LLIFRLLQGLVSKGSWTAGYTLI). Over 220–232 (TEFVGLGYRRTVA) the chain is Cytoplasmic. The helical transmembrane segment at 233–253 (ILYQMAFTVGLVLLSGLAYIL) threads the bilayer. The Extracellular portion of the chain corresponds to 254-257 (PHWR). Residues 258 to 278 (WLQLAVSLPIFLLLFRFWFVP) form a helical membrane-spanning segment. A Proline-rich sequence motif is present at residues 278–282 (PESPR). The Cytoplasmic segment spans residues 279 to 342 (ESPRWLLSQK…FRTPNLRKYT (64 aa)). The residue at position 328 (Ser328) is a Phosphoserine. A helical transmembrane segment spans residues 343 to 363 (FILMYLWFTSSVVYQGLIMHV). Residues 364–371 (GATGGNLY) lie on the Extracellular side of the membrane. Residues 372–392 (LDFLYSALVEFPAGFIILVTI) traverse the membrane as a helical segment. Topologically, residues 393–398 (DRFGRR) are cytoplasmic. A helical transmembrane segment spans residues 399–418 (YPLATSNLAAGLACFLMIFI). The Extracellular portion of the chain corresponds to 419–423 (PHDLP). The chain crosses the membrane as a helical span at residues 424–446 (WLNIMVACVGRMGITIVFQMVCL). Over 447–459 (VNAELFPTFIRNL) the chain is Cytoplasmic. Residues 460–480 (GMMVCSSLCDLGGVLTPFLVF) traverse the membrane as a helical segment. Over 481–487 (RLMEVWQ) the chain is Extracellular. A helical membrane pass occupies residues 488 to 508 (GSPLILFAALGLVAGGMTLLL). Over 509 to 563 (PETKGVTLPETIEDAENLQRKAKPKENKIYLQVQTSELNTQAAERDASQGTAQQK) the chain is Cytoplasmic.

It belongs to the major facilitator (TC 2.A.1) superfamily. Organic cation transporter (TC 2.A.1.19) family. In terms of processing, phosphorylated.

The protein resides in the basolateral cell membrane. It is found in the apical cell membrane. Its subcellular location is the lateral cell membrane. The protein localises to the basal cell membrane. It localises to the cell membrane. It catalyses the reaction 1-methylnicotinamide(out) = 1-methylnicotinamide(in). The enzyme catalyses dopamine(out) = dopamine(in). It carries out the reaction serotonin(out) = serotonin(in). The catalysed reaction is (R)-adrenaline(out) = (R)-adrenaline(in). It catalyses the reaction (R)-noradrenaline(out) = (R)-noradrenaline(in). The enzyme catalyses histamine(out) = histamine(in). It carries out the reaction guanidine(out) = guanidine(in). The catalysed reaction is choline(out) = choline(in). It catalyses the reaction acetylcholine(in) = acetylcholine(out). The enzyme catalyses thiamine(in) = thiamine(out). It carries out the reaction spermidine(in) = spermidine(out). The catalysed reaction is agmatine(out) = agmatine(in). It catalyses the reaction putrescine(out) = putrescine(in). The enzyme catalyses (R)-carnitine(in) = (R)-carnitine(out). It carries out the reaction O-isobutanoyl-(R)-carnitine(in) = O-isobutanoyl-(R)-carnitine(out). The catalysed reaction is O-acetyl-(R)-carnitine(in) = O-acetyl-(R)-carnitine(out). It catalyses the reaction O-3-hydroxybutanoyl-(R)-carnitine(in) = O-3-hydroxybutanoyl-(R)-carnitine(out). The enzyme catalyses O-propanoyl-(R)-carnitine(in) = O-propanoyl-(R)-carnitine(out). It carries out the reaction O-butanoyl-(R)-carnitine(in) = O-butanoyl-(R)-carnitine(out). The catalysed reaction is O-2-methylbutanoyl-(R)-carnitine(in) = O-2-methylbutanoyl-(R)-carnitine(out). It catalyses the reaction O-3-methylbutanoyl-(R)-carnitine(in) = O-3-methylbutanoyl-(R)-carnitine(out). The enzyme catalyses O-hexanoyl-(R)-carnitine(in) = O-hexanoyl-(R)-carnitine(out). It carries out the reaction L-histidyl-L-proline diketopiperazine(in) = L-histidyl-L-proline diketopiperazine(out). The catalysed reaction is (R)-salsolinol(in) = (R)-salsolinol(out). It catalyses the reaction prostaglandin F2alpha(out) = prostaglandin F2alpha(in). The enzyme catalyses prostaglandin E2(out) = prostaglandin E2(in). Phosphorylation of the transporter leads to changes in its substrate affinity, resulting in a regulation of the transport activity. In contrast with rat ortholog, ASP uptake is inhibited by protein kinase A (PKA) and C (PKC) activation. ASP uptake is also endogenously activated by calmodulin, the calmodulin-dependent kinase II and LCK tyrosine kinase. Inhibited by cGMP, most likely through a cGMP-binding protein that interacts with OCT1. Its function is as follows. Electrogenic voltage-dependent transporter that mediates the transport of a variety of organic cations such as endogenous bioactive amines, cationic drugs and xenobiotics. Functions as a pH- and Na(+)-independent, bidirectional transporter. Cation cellular uptake or release is driven by the electrochemical potential (i.e. membrane potential and concentration gradient) and substrate selectivity. Hydrophobicity is a major requirement for recognition in polyvalent substrates and inhibitors. Primarily expressed in the basolateral membrane of hepatocytes and proximal tubules and involved in the uptake and disposition of cationic compounds from the blood by hepatic and renal clearance. Most likely functions as an uptake carrier in enterocytes contributing to the intestinal elimination of organic cations from the systemic circulation. Transports endogenous monoamines such as N-1-methylnicotinamide (NMN), guanidine, neurotransmitters dopamine, serotonin, noradrenaline, adrenaline and histamine, and quaternary ammonium compound such as choline. Also transports natural polyamines such as spermidine, agmatine and putrescine at low affinity, but relatively high turnover. Involved in the hepatic and intestinal uptake of the vitamin B1/thiamine, hence regulating hepatic lipid and energy metabolism. Contributes to the influx and efflux of fatty acid carriers carnitines and acylcarnitines across the basolateral membrane of hepatocytes, from the liver to the systemic circulation and inversely and may be involved in regulating the systemic availability of hepatic acylcarnitines. Also capable of transporting non-amine endogenous compounds such as prostaglandin E2 (PGE2) and prostaglandin F2-alpha (PGF2-alpha). May contribute to the transport of cationic compounds in testes across the blood-testis-barrier. Also mediates the uptake of xenobiotics tributylmethylammonium (TBuMA), quinidine, N-methyl-quinine (NMQ), N-methyl-quinidine (NMQD) N-(4,4-azo-n-pentyl)-quinuclidine (APQ), azidoprocainamide methoiodide (AMP), N-(4,4-azo-n-pentyl)-21-deoxyajmalinium (APDA) and 4-(4-(dimethylamino)styryl)-N-methylpyridinium (ASP). The protein is Solute carrier family 22 member 1 (SLC22A1) of Bos taurus (Bovine).